The primary structure comprises 117 residues: Protein RALF-like 32 (117 aa).

An N-terminal signal peptide occupies residues 1 to 26 (MEIKPSRIFSTITIFFLCLLLAHVTS). Residues 27-64 (KASSSSLCNGSVAECSSMVETEEMSVIMESWSSQRLTE) constitute a propeptide, removed in mature form. N-linked (GlcNAc...) asparagine glycosylation is present at Asn-35. The disordered stretch occupies residues 77-107 (RNQPACDGGKRGESYSTQCLPPPSNPYSRGC). Disulfide bonds link Cys-82–Cys-95 and Cys-107–Cys-113.

It belongs to the plant rapid alkalinization factor (RALF) family. Post-translationally, proteolytically cleaved, probably by S1P, a subtilisin-like serine protease (subtilase).

It localises to the secreted. Its function is as follows. Cell signaling peptide that may regulate plant stress, growth, and development. Mediates a rapid alkalinization of extracellular space by mediating a transient increase in the cytoplasmic Ca(2+) concentration leading to a calcium-dependent signaling events through a cell surface receptor and a concomitant activation of some intracellular mitogen-activated protein kinases. The sequence is that of Protein RALF-like 32 (RALFL32) from Arabidopsis thaliana (Mouse-ear cress).